Here is a 746-residue protein sequence, read N- to C-terminus: PAN2-PAN3 deadenylation complex subunit pan3 (746 aa).

The segment at 7–35 (PKNQKQCKNIALHGYCRNSDKCEFSHELT) adopts a C3H1-type zinc-finger fold. Over residues 64–97 (QQQQQQQNSNGNGSNNTATSNNPIISPNSNIASP) the composition is skewed to low complexity. 3 disordered regions span residues 64–100 (QQQQ…PLKK), 169–205 (DDQH…NMNN), and 219–275 (NASP…PSLQ). The segment covering 196-205 (NNGIDPNMNN) has biased composition (polar residues). Residues 221–275 (SPQSYQQQFQQPNPSPQSSSQQQQQQQQQQQQAVYQQQQQQQPSSQPLAQNPSLQ) are compositionally biased toward low complexity. Residues 351–610 (DPNDPRIKNI…NIDEVVLMIS (260 aa)) are pseudokinase domain. Residues arginine 407, 457–464 (EFFPGSET), and 509–510 (SK) each bind ATP. Residues 611-649 (GRLLQENNYLHTYTDDLETELSKEYENGRLFRLVTKLGF) adopt a coiled-coil conformation. The interval 650-746 (INERPLYDMD…SELVSQKSHI (97 aa)) is knob domain.

The protein belongs to the protein kinase superfamily. PAN3 family. In terms of assembly, homodimer. Forms a heterotrimer with a catalytic subunit PAN2 to form the poly(A)-nuclease (PAN) deadenylation complex. Interacts (via PAM-2 motif) with poly(A)-binding protein (via PABC domain), conferring substrate specificity of the enzyme complex.

Its subcellular location is the cytoplasm. In terms of biological role, regulatory subunit of the poly(A)-nuclease (PAN) deadenylation complex, one of two cytoplasmic mRNA deadenylases involved in mRNA turnover. PAN specifically shortens poly(A) tails of RNA and the activity is stimulated by poly(A)-binding protein (PABP). PAN deadenylation is followed by rapid degradation of the shortened mRNA tails by the CCR4-NOT complex. Deadenylated mRNAs are then degraded by two alternative mechanisms, namely exosome-mediated 3'-5' exonucleolytic degradation, or deadenylation-dependent mRNA decaping and subsequent 5'-3' exonucleolytic degradation by XRN1. PAN3 acts as a positive regulator for PAN activity, recruiting the catalytic subunit PAN2 to mRNA via its interaction with RNA and PABP. The polypeptide is PAN2-PAN3 deadenylation complex subunit pan3 (Dictyostelium discoideum (Social amoeba)).